The primary structure comprises 114 residues: Integration host factor subunit alpha (114 aa).

This sequence belongs to the bacterial histone-like protein family. As to quaternary structure, heterodimer of an alpha and a beta chain.

Its function is as follows. This protein is one of the two subunits of integration host factor, a specific DNA-binding protein that functions in genetic recombination as well as in transcriptional and translational control. In Afipia carboxidovorans (strain ATCC 49405 / DSM 1227 / KCTC 32145 / OM5) (Oligotropha carboxidovorans), this protein is Integration host factor subunit alpha.